Here is a 215-residue protein sequence, read N- to C-terminus: Elongation factor Ts (215 aa).

Positions 80–83 are involved in Mg(2+) ion dislocation from EF-Tu; it reads TDFA.

Belongs to the EF-Ts family.

It localises to the cytoplasm. Its function is as follows. Associates with the EF-Tu.GDP complex and induces the exchange of GDP to GTP. It remains bound to the aminoacyl-tRNA.EF-Tu.GTP complex up to the GTP hydrolysis stage on the ribosome. The sequence is that of Elongation factor Ts from Acetivibrio thermocellus (strain ATCC 27405 / DSM 1237 / JCM 9322 / NBRC 103400 / NCIMB 10682 / NRRL B-4536 / VPI 7372) (Clostridium thermocellum).